The following is a 125-amino-acid chain: Large ribosomal subunit protein bL12 (125 aa).

The protein belongs to the bacterial ribosomal protein bL12 family. In terms of assembly, homodimer. Part of the ribosomal stalk of the 50S ribosomal subunit. Forms a multimeric L10(L12)X complex, where L10 forms an elongated spine to which 2 to 4 L12 dimers bind in a sequential fashion. Binds GTP-bound translation factors.

Forms part of the ribosomal stalk which helps the ribosome interact with GTP-bound translation factors. Is thus essential for accurate translation. The polypeptide is Large ribosomal subunit protein bL12 (Rickettsia conorii (strain ATCC VR-613 / Malish 7)).